Here is a 216-residue protein sequence, read N- to C-terminus: Probable calcium-binding protein CML35 (216 aa).

The segment at 18-58 (TKSKASVSRSEPSSFSSNASSSSSDGSYGNLKQGPTATPIS) is disordered. Residues 23–44 (SVSRSEPSSFSSNASSSSSDGS) are compositionally biased toward low complexity. EF-hand domains lie at 66-101 (DFYTELVQAFKLIDRDDDGVVSRGDLAALISRLSHE), 103-138 (PSQEEVSLMLREVDGGDGGCISLEDLASRVAGTSGE), 141-176 (VETEELREVFEIFDVDRNGKISAEELHRVFGVIGDE), and 178-213 (CTLEECMRMIATVDGNGDGFVCFDDFCRMMVPAMND). Ca(2+) contacts are provided by Asp79, Asp81, Asp83, and Asp90. Residues Asp154, Asp156, Asn158, Lys160, Glu165, Asp191, Asn193, Asp195, and Asp202 each contribute to the Ca(2+) site.

In terms of biological role, potential calcium sensor. In Arabidopsis thaliana (Mouse-ear cress), this protein is Probable calcium-binding protein CML35 (CML35).